A 239-amino-acid polypeptide reads, in one-letter code: 1-(5-phosphoribosyl)-5-[(5-phosphoribosylamino)methylideneamino] imidazole-4-carboxamide isomerase (239 aa).

The Proton acceptor role is filled by D8. The Proton donor role is filled by D129.

This sequence belongs to the HisA/HisF family.

Its subcellular location is the cytoplasm. It carries out the reaction 1-(5-phospho-beta-D-ribosyl)-5-[(5-phospho-beta-D-ribosylamino)methylideneamino]imidazole-4-carboxamide = 5-[(5-phospho-1-deoxy-D-ribulos-1-ylimino)methylamino]-1-(5-phospho-beta-D-ribosyl)imidazole-4-carboxamide. Its pathway is amino-acid biosynthesis; L-histidine biosynthesis; L-histidine from 5-phospho-alpha-D-ribose 1-diphosphate: step 4/9. This Bacillus thuringiensis (strain Al Hakam) protein is 1-(5-phosphoribosyl)-5-[(5-phosphoribosylamino)methylideneamino] imidazole-4-carboxamide isomerase.